The primary structure comprises 143 residues: uncharacterized protein (143 aa).

The region spanning 24–78 (IRQRRRWQNMSQAALGEAIGVTFQQVQKYEKGSNRVGAGRLQQISDALEVHPSYF) is the HTH cro/C1-type domain. Residues 35 to 54 (QAALGEAIGVTFQQVQKYEK) constitute a DNA-binding region (H-T-H motif).

This is an uncharacterized protein from Sinorhizobium fredii (strain NBRC 101917 / NGR234).